The sequence spans 226 residues: Movement and silencing protein TGBp1 (226 aa).

The (+)RNA virus helicase ATP-binding domain maps to Met-1 to Thr-138. In terms of domain architecture, (+)RNA virus helicase C-terminal spans Asn-139–Ala-226.

Belongs to the Tymovirales TGBp1 protein family. As to quaternary structure, homodimer and homooligomer. Interacts with capsid protein. Interacts with host AGO1; this interaction targets the host protein for degradation, thereby suppressing the antiviral RNA silencing.

The protein localises to the host cytoplasm. In terms of biological role, transports viral genome to neighboring plant cells directly through plasmosdesmata, without any budding. The movement protein allows efficient cell to cell propagation, by bypassing the host cell wall barrier. Increases plasmodesma size exclusion limit. Acts as a suppressor of RNA-mediated gene silencing, also known as post-transcriptional gene silencing (PTGS), a mechanism of plant viral defense that limits the accumulation of viral RNAs. In Brassica campestris (Field mustard), this protein is Movement and silencing protein TGBp1.